Reading from the N-terminus, the 341-residue chain is HTH-type sugar sensing transcriptional regulator TrmBL1 (341 aa).

Positions 32 to 53 (SKATDVTKESGIPHTRIYDVLS) form a DNA-binding region, H-T-H motif.

This sequence belongs to the transcriptional regulator TrmB family. Homotetramer. Forms homooctamers in the presence of maltotriose or maltose.

Repressor activity is regulated by binding of different sugars to TrmBL1. Binding of maltose and maltotriose results in derepression of the target genes. However, high sugar concentration results in formation of octamers with high affinity for DNA, which may prevent transcription of target genes. Functionally, global transcriptional repressor of the maltodextrin transport gene cluster (mdxE operon) and most likely of all genes encoding glycolytic enzymes. Acts by binding to the conserved TGM (Thermococcales-Glycolytic-Motif) sequences in their promoter region. Can also interact with non-TGM sequences. The polypeptide is HTH-type sugar sensing transcriptional regulator TrmBL1 (trmBL1) (Pyrococcus furiosus (strain ATCC 43587 / DSM 3638 / JCM 8422 / Vc1)).